Reading from the N-terminus, the 282-residue chain is Hydroxyethylthiazole kinase 2 (282 aa).

Methionine 44 is a substrate binding site. ATP is bound by residues arginine 120 and serine 179. Position 206 (glycine 206) interacts with substrate.

Belongs to the Thz kinase family. It depends on Mg(2+) as a cofactor.

The catalysed reaction is 5-(2-hydroxyethyl)-4-methylthiazole + ATP = 4-methyl-5-(2-phosphooxyethyl)-thiazole + ADP + H(+). It functions in the pathway cofactor biosynthesis; thiamine diphosphate biosynthesis; 4-methyl-5-(2-phosphoethyl)-thiazole from 5-(2-hydroxyethyl)-4-methylthiazole: step 1/1. In terms of biological role, catalyzes the phosphorylation of the hydroxyl group of 4-methyl-5-beta-hydroxyethylthiazole (THZ). The sequence is that of Hydroxyethylthiazole kinase 2 from Methanosphaera stadtmanae (strain ATCC 43021 / DSM 3091 / JCM 11832 / MCB-3).